The sequence spans 197 residues: Phosphoheptose isomerase (197 aa).

Positions 36–197 constitute an SIS domain; that stretch reads MVNALLNEGK…IDSQLFGSEE (162 aa). Position 51 to 53 (51 to 53) interacts with substrate; sequence NGG. 2 residues coordinate Zn(2+): His-60 and Glu-64. Substrate-binding positions include Glu-64, 93 to 94, 119 to 121, Ser-124, and Gln-174; these read ND and STS. Positions 174 and 182 each coordinate Zn(2+).

Belongs to the SIS family. GmhA subfamily. As to quaternary structure, homotetramer. Zn(2+) is required as a cofactor.

It is found in the cytoplasm. It catalyses the reaction 2 D-sedoheptulose 7-phosphate = D-glycero-alpha-D-manno-heptose 7-phosphate + D-glycero-beta-D-manno-heptose 7-phosphate. It participates in carbohydrate biosynthesis; D-glycero-D-manno-heptose 7-phosphate biosynthesis; D-glycero-alpha-D-manno-heptose 7-phosphate and D-glycero-beta-D-manno-heptose 7-phosphate from sedoheptulose 7-phosphate: step 1/1. In terms of biological role, catalyzes the isomerization of sedoheptulose 7-phosphate in D-glycero-D-manno-heptose 7-phosphate. The polypeptide is Phosphoheptose isomerase (Pseudomonas putida (strain GB-1)).